The sequence spans 470 residues: Argininosuccinate lyase (470 aa).

The protein belongs to the lyase 1 family. Argininosuccinate lyase subfamily.

The protein resides in the cytoplasm. The enzyme catalyses 2-(N(omega)-L-arginino)succinate = fumarate + L-arginine. The protein operates within amino-acid biosynthesis; L-arginine biosynthesis; L-arginine from L-ornithine and carbamoyl phosphate: step 3/3. The protein is Argininosuccinate lyase of Mycobacterium sp. (strain MCS).